A 125-amino-acid polypeptide reads, in one-letter code: MIKLRLKRYGKKREASFRLVACNSTSRRDGRPLEELGFYNPRTKETRLDTEALRTRLSQGAQPTDAVRSLLEKGGLIEKTIRPAEIEGKKKQALARQSASKKAVKEKTEESKGSEVDSETSTSAD.

A disordered region spans residues Glu87–Asp125. Residues Ala103–Glu115 are compositionally biased toward basic and acidic residues.

It belongs to the bacterial ribosomal protein bS16 family.

In Prochlorococcus marinus (strain MIT 9211), this protein is Small ribosomal subunit protein bS16.